The sequence spans 292 residues: ATP synthase gamma chain (292 aa).

Belongs to the ATPase gamma chain family. As to quaternary structure, F-type ATPases have 2 components, CF(1) - the catalytic core - and CF(0) - the membrane proton channel. CF(1) has five subunits: alpha(3), beta(3), gamma(1), delta(1), epsilon(1). CF(0) has three main subunits: a, b and c.

It localises to the cell membrane. Produces ATP from ADP in the presence of a proton gradient across the membrane. The gamma chain is believed to be important in regulating ATPase activity and the flow of protons through the CF(0) complex. The chain is ATP synthase gamma chain from Prosthecochloris aestuarii (strain DSM 271 / SK 413).